A 307-amino-acid chain; its full sequence is Elongation factor Ts (307 aa).

Positions 80 to 83 (TDFV) are involved in Mg(2+) ion dislocation from EF-Tu.

The protein belongs to the EF-Ts family.

The protein localises to the cytoplasm. Associates with the EF-Tu.GDP complex and induces the exchange of GDP to GTP. It remains bound to the aminoacyl-tRNA.EF-Tu.GTP complex up to the GTP hydrolysis stage on the ribosome. The chain is Elongation factor Ts from Bradyrhizobium sp. (strain ORS 278).